Consider the following 592-residue polypeptide: Aspartate--tRNA(Asp/Asn) ligase (592 aa).

An L-aspartate-binding site is contributed by glutamate 175. The aspartate stretch occupies residues 199–202 (QLFK). L-aspartate is bound at residue arginine 221. Residues 221 to 223 (RDE) and glutamine 230 contribute to the ATP site. Histidine 450 is a binding site for L-aspartate. Glutamate 483 is an ATP binding site. An L-aspartate-binding site is contributed by arginine 490. 535 to 538 (GLDR) is an ATP binding site.

Belongs to the class-II aminoacyl-tRNA synthetase family. Type 1 subfamily. In terms of assembly, homodimer.

The protein resides in the cytoplasm. It catalyses the reaction tRNA(Asx) + L-aspartate + ATP = L-aspartyl-tRNA(Asx) + AMP + diphosphate. Aspartyl-tRNA synthetase with relaxed tRNA specificity since it is able to aspartylate not only its cognate tRNA(Asp) but also tRNA(Asn). Reaction proceeds in two steps: L-aspartate is first activated by ATP to form Asp-AMP and then transferred to the acceptor end of tRNA(Asp/Asn). This Acinetobacter baumannii (strain AB307-0294) protein is Aspartate--tRNA(Asp/Asn) ligase.